Consider the following 423-residue polypeptide: Ornithine cyclodeaminase (423 aa).

NAD(+)-binding residues include asparagine 241, alanine 242, aspartate 320, threonine 352, methionine 353, leucine 354, histidine 355, aspartate 373, aspartate 396, and valine 397.

It belongs to the AgrE/ArgZ ornithine cyclodeaminase family. NAD(+) is required as a cofactor.

The catalysed reaction is L-ornithine = L-proline + NH4(+). Functionally, catalyzes the conversion of ornithine to proline, with the release of ammonia. This is Ornithine cyclodeaminase from Methanocaldococcus jannaschii (strain ATCC 43067 / DSM 2661 / JAL-1 / JCM 10045 / NBRC 100440) (Methanococcus jannaschii).